The chain runs to 43 residues: Protein PsbN (43 aa).

Residues 7 to 27 (LIVFIASLLLGVTGYSVYTAF) form a helical membrane-spanning segment.

The protein belongs to the PsbN family.

The protein localises to the plastid. It localises to the chloroplast thylakoid membrane. May play a role in photosystem I and II biogenesis. The chain is Protein PsbN from Rhodomonas salina (Cryptomonas salina).